A 189-amino-acid chain; its full sequence is Small ribosomal subunit protein uS5 (189 aa).

In terms of domain architecture, S5 DRBM spans phenylalanine 20–valine 83.

This sequence belongs to the universal ribosomal protein uS5 family. In terms of assembly, part of the 30S ribosomal subunit. Contacts proteins S4 and S8.

With S4 and S12 plays an important role in translational accuracy. Functionally, located at the back of the 30S subunit body where it stabilizes the conformation of the head with respect to the body. This is Small ribosomal subunit protein uS5 from Methylocella silvestris (strain DSM 15510 / CIP 108128 / LMG 27833 / NCIMB 13906 / BL2).